We begin with the raw amino-acid sequence, 211 residues long: Imidazole glycerol phosphate synthase subunit HisH (211 aa).

The region spanning 5-211 (SVALLDYGSG…QLLRNWVDSL (207 aa)) is the Glutamine amidotransferase type-1 domain. Cysteine 83 acts as the Nucleophile in catalysis. Catalysis depends on residues histidine 192 and glutamate 194.

Heterodimer of HisH and HisF.

It is found in the cytoplasm. The catalysed reaction is 5-[(5-phospho-1-deoxy-D-ribulos-1-ylimino)methylamino]-1-(5-phospho-beta-D-ribosyl)imidazole-4-carboxamide + L-glutamine = D-erythro-1-(imidazol-4-yl)glycerol 3-phosphate + 5-amino-1-(5-phospho-beta-D-ribosyl)imidazole-4-carboxamide + L-glutamate + H(+). It catalyses the reaction L-glutamine + H2O = L-glutamate + NH4(+). It functions in the pathway amino-acid biosynthesis; L-histidine biosynthesis; L-histidine from 5-phospho-alpha-D-ribose 1-diphosphate: step 5/9. Its function is as follows. IGPS catalyzes the conversion of PRFAR and glutamine to IGP, AICAR and glutamate. The HisH subunit catalyzes the hydrolysis of glutamine to glutamate and ammonia as part of the synthesis of IGP and AICAR. The resulting ammonia molecule is channeled to the active site of HisF. The chain is Imidazole glycerol phosphate synthase subunit HisH from Nocardia farcinica (strain IFM 10152).